Reading from the N-terminus, the 319-residue chain is Acetyl-coenzyme A carboxylase carboxyl transferase subunit alpha (319 aa).

The CoA carboxyltransferase C-terminal domain maps to 35–296 (NIDEEVHRLR…KAQLLEDLAD (262 aa)).

Belongs to the AccA family. Acetyl-CoA carboxylase is a heterohexamer composed of biotin carboxyl carrier protein (AccB), biotin carboxylase (AccC) and two subunits each of ACCase subunit alpha (AccA) and ACCase subunit beta (AccD).

The protein localises to the cytoplasm. It catalyses the reaction N(6)-carboxybiotinyl-L-lysyl-[protein] + acetyl-CoA = N(6)-biotinyl-L-lysyl-[protein] + malonyl-CoA. It participates in lipid metabolism; malonyl-CoA biosynthesis; malonyl-CoA from acetyl-CoA: step 1/1. Its function is as follows. Component of the acetyl coenzyme A carboxylase (ACC) complex. First, biotin carboxylase catalyzes the carboxylation of biotin on its carrier protein (BCCP) and then the CO(2) group is transferred by the carboxyltransferase to acetyl-CoA to form malonyl-CoA. This chain is Acetyl-coenzyme A carboxylase carboxyl transferase subunit alpha, found in Salmonella dublin (strain CT_02021853).